Here is a 278-residue protein sequence, read N- to C-terminus: Methyltransferase adrK (278 aa).

S-adenosyl-L-methionine contacts are provided by residues 124–125, 151–152, and 152–153; these read DL, DV, and VL.

The protein belongs to the class I-like SAM-binding methyltransferase superfamily. Homodimer.

Its pathway is secondary metabolite biosynthesis; terpenoid biosynthesis. Its function is as follows. Methyltransferase; part of the gene cluster that mediates the biosynthesis of andrastins, meroterpenoid compounds that exhibit inhibitory activity against ras farnesyltransferase, suggesting that they could be promising leads for antitumor agents. The first step of the pathway is the synthesis of 3,5-dimethylorsellinic acid (DMOA) by the polyketide synthase adrD via condensation of one acetyl-CoA starter unit with 3 malonyl-CoA units and 2 methylations. DMAO is then converted to farnesyl-DMAO by the prenyltransferase adrG. The methyltransferase adrK catalyzes the methylation of the carboxyl group of farnesyl-DMAO to farnesyl-DMAO methyl ester which is further converted to epoxyfarnesyl-DMAO methyl ester by the FAD-dependent monooxygenase adrH. The terpene cyclase adrI then catalyzes the carbon skeletal rearrangement to generate the andrastin E, the first compound in the pathway having the andrastin scaffold, with the tetracyclic ring system. The post-cyclization tailoring enzymes adrF, adrE, adrJ, and adrA, are involved in the conversion of andrastin E into andrastin A. The short chain dehydrogenase adrF is responsible for the oxidation of the C-3 a hydroxyl group of andrastin E to yield the corresponding ketone, andrastin D. The ketoreductase adrE stereoselectively reduces the carbonyl moiety to reverse the stereochemistry of the C-3 position to yield andrastin F. The acetyltransferase adrJ is the acetyltransferase that attaches the acetyl group to the C-3 hydroxyl group of andrastin F to yield andrastin C. Finally, the cytochrome P450 monooxygenase adrA catalyzes two sequential oxidation reactions of the C-23 methyl group, to generate the corresponding alcohol andrastin B, and aldehyde andrastin A. In Penicillium roqueforti, this protein is Methyltransferase adrK.